The primary structure comprises 415 residues: tRNA(Met) cytidine acetate ligase (415 aa).

ATP contacts are provided by residues 7–20 (VVEY…HLYH), G101, N162, and 187–188 (RI).

The protein belongs to the TmcAL family. As to quaternary structure, homodimer.

It is found in the cytoplasm. The enzyme catalyses cytidine(34) in elongator tRNA(Met) + acetate + ATP = N(4)-acetylcytidine(34) in elongator tRNA(Met) + AMP + diphosphate. Its function is as follows. Catalyzes the formation of N(4)-acetylcytidine (ac(4)C) at the wobble position of elongator tRNA(Met), using acetate and ATP as substrates. First activates an acetate ion to form acetyladenylate (Ac-AMP) and then transfers the acetyl group to tRNA to form ac(4)C34. The sequence is that of tRNA(Met) cytidine acetate ligase from Bacillus subtilis (strain 168).